The sequence spans 168 residues: 2-C-methyl-D-erythritol 2,4-cyclodiphosphate synthase (168 aa).

A divalent metal cation is bound by residues aspartate 15 and histidine 17. 4-CDP-2-C-methyl-D-erythritol 2-phosphate is bound by residues 15-17 (DVH) and 45-46 (HS). Histidine 53 provides a ligand contact to a divalent metal cation. 4-CDP-2-C-methyl-D-erythritol 2-phosphate-binding positions include 72–76 (FPNSD), phenylalanine 150, and arginine 153.

It belongs to the IspF family. In terms of assembly, homotrimer. A divalent metal cation is required as a cofactor.

It catalyses the reaction 4-CDP-2-C-methyl-D-erythritol 2-phosphate = 2-C-methyl-D-erythritol 2,4-cyclic diphosphate + CMP. The protein operates within isoprenoid biosynthesis; isopentenyl diphosphate biosynthesis via DXP pathway; isopentenyl diphosphate from 1-deoxy-D-xylulose 5-phosphate: step 4/6. In terms of biological role, involved in the biosynthesis of isopentenyl diphosphate (IPP) and dimethylallyl diphosphate (DMAPP), two major building blocks of isoprenoid compounds. Catalyzes the conversion of 4-diphosphocytidyl-2-C-methyl-D-erythritol 2-phosphate (CDP-ME2P) to 2-C-methyl-D-erythritol 2,4-cyclodiphosphate (ME-CPP) with a corresponding release of cytidine 5-monophosphate (CMP). This Anaplasma phagocytophilum (strain HZ) protein is 2-C-methyl-D-erythritol 2,4-cyclodiphosphate synthase.